A 173-amino-acid polypeptide reads, in one-letter code: NADH-ubiquinone oxidoreductase chain 6 (173 aa).

The next 5 membrane-spanning stretches (helical) occupy residues 1–21 (MTYF…AVAS), 27–47 (YGVV…LSLG), 48–68 (VSFV…VVFV), 87–107 (VVGY…VGGL), and 139–159 (CGVG…FVVL).

It belongs to the complex I subunit 6 family.

The protein localises to the mitochondrion membrane. It carries out the reaction a ubiquinone + NADH + 5 H(+)(in) = a ubiquinol + NAD(+) + 4 H(+)(out). Functionally, core subunit of the mitochondrial membrane respiratory chain NADH dehydrogenase (Complex I) that is believed to belong to the minimal assembly required for catalysis. Complex I functions in the transfer of electrons from NADH to the respiratory chain. The immediate electron acceptor for the enzyme is believed to be ubiquinone. In Larus canus (Common gull), this protein is NADH-ubiquinone oxidoreductase chain 6 (MT-ND6).